A 318-amino-acid polypeptide reads, in one-letter code: Glutathione synthetase (318 aa).

The 186-residue stretch at 129 to 314 (KLAITEFPDL…VPEMFAVALE (186 aa)) folds into the ATP-grasp domain. An ATP-binding site is contributed by 155–211 (HAAQGDVIVKPLDGMGGTGIFRLQRSEPNLNAILETLTDNGTRTIMAQRYIPEIVKG). E285 and N287 together coordinate Mg(2+).

The protein belongs to the prokaryotic GSH synthase family. Requires Mg(2+) as cofactor. Mn(2+) is required as a cofactor.

It carries out the reaction gamma-L-glutamyl-L-cysteine + glycine + ATP = glutathione + ADP + phosphate + H(+). It participates in sulfur metabolism; glutathione biosynthesis; glutathione from L-cysteine and L-glutamate: step 2/2. In Bordetella bronchiseptica (strain ATCC BAA-588 / NCTC 13252 / RB50) (Alcaligenes bronchisepticus), this protein is Glutathione synthetase.